A 434-amino-acid polypeptide reads, in one-letter code: MSILKIHAREIFDSRGNPTVEVDLYTAKGLFRAAVPSGASTGIYEALELRDNDKTRFMGKGVSKAVEHINKTIAPALVSKKLNVVEQEKIDQLMIEMDGTENKSKFGANAILGVSLAVCKAGAVEKGVPLYRHIADLAGNPEVILPVPAFNVINGGSHAGNKLAMQEFMILPVGASSFREAMRIGAEVYHNLKNVIKEKYGKDATNVGDEGGFAPNILENKEALELLKSAIAKAGYTDQVVIGMDVAASEFYRAGKYDLDFKSPDDASRYITPDQLADLYKSFIKDYPVVSIEDPFDQDDWDAWQKFTATAGIQVVGDDLTVTNPKRIAKAAGEKSCNCLLLKVNQIGSVTESLQACKLAQSNGWGVMVSHRSGETEDTFIADLVVGLCTGQIKTGAPCRSERLAKYNQILRIEEELGSKAKFAGRSFRNPLAK.

The residue at position 2 (Ser-2) is an N-acetylserine. An N6-acetyllysine modification is found at Lys-5. Ser-40 provides a ligand contact to Mg(2+). The residue at position 44 (Tyr-44) is a Phosphotyrosine. At Lys-60 the chain carries N6-acetyllysine; alternate. An N6-succinyllysine; alternate modification is found at Lys-60. Lys-64 and Lys-71 each carry N6-acetyllysine. Residue Lys-89 is modified to N6-acetyllysine; alternate. Residue Lys-89 is modified to N6-succinyllysine; alternate. Residue Lys-126 is modified to N6-acetyllysine. Substrate contacts are provided by His-158 and Glu-167. N6-acetyllysine is present on residues Lys-193 and Lys-199. The residue at position 202 (Lys-202) is an N6-acetyllysine; alternate. Lys-202 participates in a covalent cross-link: Glycyl lysine isopeptide (Lys-Gly) (interchain with G-Cter in SUMO2); alternate. Catalysis depends on Glu-210, which acts as the Proton donor. Lys-228 and Lys-233 each carry N6-acetyllysine; alternate. Lys-228 is modified (N6-succinyllysine; alternate). The residue at position 228 (Lys-228) is an N6-(2-hydroxyisobutyryl)lysine; alternate. The residue at position 233 (Lys-233) is an N6-malonyllysine; alternate. Asp-245 is a Mg(2+) binding site. Lys-256 is subject to N6-acetyllysine. Ser-263 carries the post-translational modification Phosphoserine. Lys-281 carries the post-translational modification N6-acetyllysine; alternate. Lys-281 is modified (N6-(2-hydroxyisobutyryl)lysine; alternate). At Lys-285 the chain carries N6-acetyllysine. Phosphotyrosine is present on Tyr-287. At Ser-291 the chain carries Phosphoserine. Mg(2+) contacts are provided by Glu-293 and Asp-318. The substrate site is built by Glu-293 and Asp-318. An N6-acetyllysine mark is found at Lys-335 and Lys-343. Lys-343 functions as the Proton acceptor in the catalytic mechanism. Substrate-binding positions include 370–373 and Lys-394; that span reads SHRS. The tract at residues 405 to 434 is required for interaction with PLG; that stretch reads AKYNQILRIEEELGSKAKFAGRSFRNPLAK. At Lys-406 the chain carries N6-acetyllysine. Residue Lys-420 is modified to N6-acetyllysine; alternate. The residue at position 420 (Lys-420) is an N6-succinyllysine; alternate. The residue at position 420 (Lys-420) is an N6-malonyllysine; alternate.

The protein belongs to the enolase family. In terms of assembly, mammalian enolase is composed of 3 isozyme subunits, alpha, beta and gamma, which can form homodimers or heterodimers which are cell-type and development-specific. ENO1 interacts with PLG in the neuronal plasma membrane and promotes its activation. The C-terminal lysine is required for this binding. Interacts with ENO4 and PGAM2. Interacts with CMTM6. Requires Mg(2+) as cofactor. ISGylated. In terms of processing, lysine 2-hydroxyisobutyrylation (Khib) by p300/EP300 activates the phosphopyruvate hydratase activity. As to expression, expressed in flagella of epididymal sperm. The alpha/alpha homodimer is expressed in embryo and in most adult tissues. The alpha/beta heterodimer and the beta/beta homodimer are found in striated muscle, and the alpha/gamma heterodimer and the gamma/gamma homodimer in neurons.

It localises to the cytoplasm. The protein resides in the cell membrane. The enzyme catalyses (2R)-2-phosphoglycerate = phosphoenolpyruvate + H2O. Its pathway is carbohydrate degradation; glycolysis; pyruvate from D-glyceraldehyde 3-phosphate: step 4/5. Functionally, glycolytic enzyme that catalyzes the conversion of 2-phosphoglycerate to phosphoenolpyruvate. In addition to glycolysis, involved in various processes such as growth control, hypoxia tolerance and allergic responses. May also function in the intravascular and pericellular fibrinolytic system due to its ability to serve as a receptor and activator of plasminogen on the cell surface of several cell-types such as leukocytes and neurons. Stimulates immunoglobulin production. The polypeptide is Alpha-enolase (Eno1) (Rattus norvegicus (Rat)).